A 415-amino-acid polypeptide reads, in one-letter code: Gamma-glutamyl phosphate reductase (415 aa).

It belongs to the gamma-glutamyl phosphate reductase family.

It is found in the cytoplasm. The enzyme catalyses L-glutamate 5-semialdehyde + phosphate + NADP(+) = L-glutamyl 5-phosphate + NADPH + H(+). It participates in amino-acid biosynthesis; L-proline biosynthesis; L-glutamate 5-semialdehyde from L-glutamate: step 2/2. Functionally, catalyzes the NADPH-dependent reduction of L-glutamate 5-phosphate into L-glutamate 5-semialdehyde and phosphate. The product spontaneously undergoes cyclization to form 1-pyrroline-5-carboxylate. The polypeptide is Gamma-glutamyl phosphate reductase (Bacillus cereus (strain ZK / E33L)).